A 399-amino-acid polypeptide reads, in one-letter code: DNA polymerase IV (399 aa).

The UmuC domain maps to 5-187; that stretch reads ILHCDLNNFY…LPVEALLYVG (183 aa). Mg(2+) is bound by residues Asp-9 and Asp-105. Residue Glu-106 is part of the active site.

It belongs to the DNA polymerase type-Y family. As to quaternary structure, monomer. It depends on Mg(2+) as a cofactor.

It is found in the cytoplasm. It carries out the reaction DNA(n) + a 2'-deoxyribonucleoside 5'-triphosphate = DNA(n+1) + diphosphate. Functionally, poorly processive, error-prone DNA polymerase involved in untargeted mutagenesis. Copies undamaged DNA at stalled replication forks, which arise in vivo from mismatched or misaligned primer ends. These misaligned primers can be extended by PolIV. Exhibits no 3'-5' exonuclease (proofreading) activity. May be involved in translesional synthesis, in conjunction with the beta clamp from PolIII. This is DNA polymerase IV from Acetivibrio thermocellus (strain ATCC 27405 / DSM 1237 / JCM 9322 / NBRC 103400 / NCIMB 10682 / NRRL B-4536 / VPI 7372) (Clostridium thermocellum).